We begin with the raw amino-acid sequence, 487 residues long: Serine/threonine-protein phosphatase 2A activator 1 (487 aa).

2 disordered regions span residues 1–28 and 426–487; these read MPMI…SSST and GGIQ…PKPE.

It belongs to the PTPA-type PPIase family.

It localises to the cytoplasm. Its subcellular location is the nucleus. It carries out the reaction [protein]-peptidylproline (omega=180) = [protein]-peptidylproline (omega=0). PPIases accelerate the folding of proteins. It catalyzes the cis-trans isomerization of proline imidic peptide bonds in oligopeptides. Acts as a regulatory subunit for PP2A-like phosphatases modulating their activity or substrate specificity, probably by inducing a conformational change in the catalytic subunit, a direct target of the PPIase. Can reactivate inactive phosphatase PP2A-phosphatase methylesterase complexes (PP2Ai) in presence of ATP and Mg(2+) by dissociating the inactive form from the complex. This is Serine/threonine-protein phosphatase 2A activator 1 (RRD1) from Mycosarcoma maydis (Corn smut fungus).